A 261-amino-acid polypeptide reads, in one-letter code: tRNA U34 carboxymethyltransferase (261 aa).

Carboxy-S-adenosyl-L-methionine-binding positions include K25, W39, K44, G63, 114-115 (VE), Y135, and R250.

The protein belongs to the class I-like SAM-binding methyltransferase superfamily. CmoB family. Homotetramer.

It catalyses the reaction carboxy-S-adenosyl-L-methionine + 5-hydroxyuridine(34) in tRNA = 5-carboxymethoxyuridine(34) in tRNA + S-adenosyl-L-homocysteine + H(+). Functionally, catalyzes carboxymethyl transfer from carboxy-S-adenosyl-L-methionine (Cx-SAM) to 5-hydroxyuridine (ho5U) to form 5-carboxymethoxyuridine (cmo5U) at position 34 in tRNAs. This is tRNA U34 carboxymethyltransferase from Helicobacter pylori (strain P12).